A 506-amino-acid chain; its full sequence is uncharacterized protein (506 aa).

2 disordered regions span residues 104 to 144 (PNSS…ATSS) and 397 to 456 (QQQK…DQLP). The span at 130-144 (ESSPTLSSSSLATSS) shows a compositional bias: low complexity. Basic and acidic residues predominate over residues 405-443 (IKDEDKNEKENKSENEEKEKEKEKEKEKEKEKEKEKEKE). Residues 405 to 455 (IKDEDKNEKENKSENEEKEKEKEKEKEKEKEKEKEKEKENEEGEEDNGDQL) are a coiled coil.

This is an uncharacterized protein from Dictyostelium discoideum (Social amoeba).